The primary structure comprises 63 residues: Large ribosomal subunit protein bL32c (63 aa).

A disordered region spans residues 38–63 (RSFSGVSEHPKPKGFSRQQTNNRVLG). Over residues 53–63 (SRQQTNNRVLG) the composition is skewed to polar residues.

It belongs to the bacterial ribosomal protein bL32 family.

It localises to the plastid. The protein localises to the chloroplast. The polypeptide is Large ribosomal subunit protein bL32c (rpl32) (Oryza sativa (Rice)).